Reading from the N-terminus, the 629-residue chain is Ras GTPase-activating protein gap-1 (629 aa).

The 216-residue stretch at 183 to 398 (DRIRPVLSSL…SVMASFLDNI (216 aa)) folds into the Ras-GAP domain. Residues 411–507 (TVFKFGNLQQ…WLNAIERQRN (97 aa)) enclose the PH domain.

The protein localises to the cytoplasm. Functionally, GTPase-activating protein, which inhibits the vulval induction by acting as a negative regulator for the member of the Ras family let-60. Probably decreases the signaling activity of Ras by stimulating its intrinsic GTPase activity, thereby lowering the levels of GTP-bound, active Ras. The polypeptide is Ras GTPase-activating protein gap-1 (gap-1) (Caenorhabditis elegans).